Consider the following 303-residue polypeptide: Pycsar effector protein BcPycTIR (303 aa).

An a nucleoside 3',5'-cyclic phosphate-binding site is contributed by 22-138 (KLVGGDKGLA…RRMAKELSKR (117 aa)). Residues 154–273 (RVFVISSAEA…DMAGVTTIPY (120 aa)) form a TIR-like region.

Purified protein forms large 2-dimensional sheets when incubated with cUMP and shorter filaments in the presence of cCMP.

It is found in the cytoplasm. It carries out the reaction NAD(+) + H2O = ADP-D-ribose + nicotinamide + H(+). Its activity is regulated as follows. Activated by cyclic UMP (cUMP) and to a lesser extent by cCMP. In terms of biological role, pycsar (pyrimidine cyclase system for antiphage resistance) provides immunity against bacteriophage. The pyrimidine cyclase (PycC) synthesizes cyclic nucleotides in response to infection; these serve as specific second messenger signals. The signals activate the adjacent effector, leading to bacterial cell death and abortive phage infection. A clade B Pycsar system. Its function is as follows. The effector protein of a two-gene Pycsar system. Upon activation by cyclic UMP (cUMP) degrades cellular NAD(+). Expression of this and adjacent uridylate cyclase BcPycC (AC A0A0J5ZXG5) probably confers resistance to bacteriophage. The genes are probably only expressed in response to bacteriophage infection. This protein probably only responds to cUMP (produced by its cognate NTP cyclase). The sequence is that of Pycsar effector protein BcPycTIR from Burkholderia cepacia (Pseudomonas cepacia).